A 950-amino-acid chain; its full sequence is Valine--tRNA ligase (950 aa).

Positions 40 to 50 (PNVTGSLHMGH) match the 'HIGH' region motif. Positions 551-555 (KMSKS) match the 'KMSKS' region motif. Lysine 554 serves as a coordination point for ATP. Residues 881–950 (LIDKSAELGR…AEQRQKIAAL (70 aa)) adopt a coiled-coil conformation.

The protein belongs to the class-I aminoacyl-tRNA synthetase family. ValS type 1 subfamily. Monomer.

Its subcellular location is the cytoplasm. The enzyme catalyses tRNA(Val) + L-valine + ATP = L-valyl-tRNA(Val) + AMP + diphosphate. Its function is as follows. Catalyzes the attachment of valine to tRNA(Val). As ValRS can inadvertently accommodate and process structurally similar amino acids such as threonine, to avoid such errors, it has a 'posttransfer' editing activity that hydrolyzes mischarged Thr-tRNA(Val) in a tRNA-dependent manner. This chain is Valine--tRNA ligase, found in Pseudomonas aeruginosa (strain ATCC 15692 / DSM 22644 / CIP 104116 / JCM 14847 / LMG 12228 / 1C / PRS 101 / PAO1).